The sequence spans 101 residues: Large ribosomal subunit protein uL24 (101 aa).

Belongs to the universal ribosomal protein uL24 family. Part of the 50S ribosomal subunit.

Its function is as follows. One of two assembly initiator proteins, it binds directly to the 5'-end of the 23S rRNA, where it nucleates assembly of the 50S subunit. In terms of biological role, one of the proteins that surrounds the polypeptide exit tunnel on the outside of the subunit. This chain is Large ribosomal subunit protein uL24, found in Clostridioides difficile (strain 630) (Peptoclostridium difficile).